A 273-amino-acid chain; its full sequence is Bis(5'-nucleosyl)-tetraphosphatase, symmetrical (273 aa).

Belongs to the Ap4A hydrolase family.

The enzyme catalyses P(1),P(4)-bis(5'-adenosyl) tetraphosphate + H2O = 2 ADP + 2 H(+). Hydrolyzes diadenosine 5',5'''-P1,P4-tetraphosphate to yield ADP. This Aliivibrio salmonicida (strain LFI1238) (Vibrio salmonicida (strain LFI1238)) protein is Bis(5'-nucleosyl)-tetraphosphatase, symmetrical.